Here is a 271-residue protein sequence, read N- to C-terminus: Ribosomal RNA small subunit methyltransferase A (271 aa).

S-adenosyl-L-methionine contacts are provided by Asn22, Leu24, Gly49, Glu70, Asp96, and Asn116.

The protein belongs to the class I-like SAM-binding methyltransferase superfamily. rRNA adenine N(6)-methyltransferase family. RsmA subfamily.

The protein resides in the cytoplasm. It catalyses the reaction adenosine(1518)/adenosine(1519) in 16S rRNA + 4 S-adenosyl-L-methionine = N(6)-dimethyladenosine(1518)/N(6)-dimethyladenosine(1519) in 16S rRNA + 4 S-adenosyl-L-homocysteine + 4 H(+). Functionally, specifically dimethylates two adjacent adenosines (A1518 and A1519) in the loop of a conserved hairpin near the 3'-end of 16S rRNA in the 30S particle. May play a critical role in biogenesis of 30S subunits. The sequence is that of Ribosomal RNA small subunit methyltransferase A from Sphingopyxis alaskensis (strain DSM 13593 / LMG 18877 / RB2256) (Sphingomonas alaskensis).